A 665-amino-acid chain; its full sequence is Transketolase 1 (665 aa).

His-26 contributes to the substrate binding site. Thiamine diphosphate contacts are provided by residues His-66 and 114–116 (GPL). Asp-155 lines the Mg(2+) pocket. The thiamine diphosphate site is built by Gly-156 and Asn-185. Mg(2+) contacts are provided by Asn-185 and Ile-187. Substrate-binding residues include His-261, Arg-358, and Ser-385. His-261 contacts thiamine diphosphate. Glu-412 (proton donor) is an active-site residue. Residue Phe-438 coordinates thiamine diphosphate. Positions 462, 470, and 521 each coordinate substrate.

This sequence belongs to the transketolase family. As to quaternary structure, homodimer. It depends on Mg(2+) as a cofactor. Ca(2+) serves as cofactor. The cofactor is Mn(2+). Co(2+) is required as a cofactor. Requires thiamine diphosphate as cofactor.

It carries out the reaction D-sedoheptulose 7-phosphate + D-glyceraldehyde 3-phosphate = aldehydo-D-ribose 5-phosphate + D-xylulose 5-phosphate. In terms of biological role, catalyzes the transfer of a two-carbon ketol group from a ketose donor to an aldose acceptor, via a covalent intermediate with the cofactor thiamine pyrophosphate. The chain is Transketolase 1 (tkt1) from Vibrio cholerae serotype O1 (strain ATCC 39315 / El Tor Inaba N16961).